A 438-amino-acid polypeptide reads, in one-letter code: uncharacterized protein (438 aa).

Disordered stretches follow at residues 1-22 (MRDNTAKGITAGSGSQQTTYDP) and 156-264 (DTAK…PWRP). A compositionally biased stretch (basic and acidic residues) spans 156 to 170 (DTAKSNEKLQGDESK). A compositionally biased stretch (low complexity) spans 171 to 189 (SSNGSSSTSTTTQRGSTNS). Over residues 191–206 (TKVKALKIEVKKKSDS) the composition is skewed to basic and acidic residues.

It belongs to the adhesin P1 family.

This is an uncharacterized protein from Mycoplasma pneumoniae (strain ATCC 29342 / M129 / Subtype 1) (Mycoplasmoides pneumoniae).